A 219-amino-acid polypeptide reads, in one-letter code: uncharacterized protein (219 aa).

The protein belongs to the CIA30 family.

The protein resides in the cytoplasm. Its subcellular location is the nucleus. This is an uncharacterized protein from Schizosaccharomyces pombe (strain 972 / ATCC 24843) (Fission yeast).